A 341-amino-acid polypeptide reads, in one-letter code: Ribosomal RNA small subunit methyltransferase C (341 aa).

The protein belongs to the methyltransferase superfamily. RsmC family. Monomer.

Its subcellular location is the cytoplasm. It catalyses the reaction guanosine(1207) in 16S rRNA + S-adenosyl-L-methionine = N(2)-methylguanosine(1207) in 16S rRNA + S-adenosyl-L-homocysteine + H(+). Functionally, specifically methylates the guanine in position 1207 of 16S rRNA in the 30S particle. This chain is Ribosomal RNA small subunit methyltransferase C, found in Pseudoalteromonas translucida (strain TAC 125).